We begin with the raw amino-acid sequence, 118 residues long: NAD(P)H-quinone oxidoreductase subunit M (118 aa).

This sequence belongs to the complex I NdhM subunit family. As to quaternary structure, NDH-1 can be composed of about 15 different subunits; different subcomplexes with different compositions have been identified which probably have different functions.

The protein resides in the cellular thylakoid membrane. It catalyses the reaction a plastoquinone + NADH + (n+1) H(+)(in) = a plastoquinol + NAD(+) + n H(+)(out). The enzyme catalyses a plastoquinone + NADPH + (n+1) H(+)(in) = a plastoquinol + NADP(+) + n H(+)(out). Its function is as follows. NDH-1 shuttles electrons from an unknown electron donor, via FMN and iron-sulfur (Fe-S) centers, to quinones in the respiratory and/or the photosynthetic chain. The immediate electron acceptor for the enzyme in this species is believed to be plastoquinone. Couples the redox reaction to proton translocation, and thus conserves the redox energy in a proton gradient. Cyanobacterial NDH-1 also plays a role in inorganic carbon-concentration. The protein is NAD(P)H-quinone oxidoreductase subunit M of Rippkaea orientalis (strain PCC 8801 / RF-1) (Cyanothece sp. (strain PCC 8801)).